Reading from the N-terminus, the 393-residue chain is Acetylornithine aminotransferase (393 aa).

Pyridoxal 5'-phosphate is bound by residues 100 to 101 and Phe-133; that span reads GA. Arg-136 contributes to the N(2)-acetyl-L-ornithine binding site. 218-221 provides a ligand contact to pyridoxal 5'-phosphate; it reads DEVQ. N6-(pyridoxal phosphate)lysine is present on Lys-247. Ser-274 lines the N(2)-acetyl-L-ornithine pocket. Thr-275 lines the pyridoxal 5'-phosphate pocket.

This sequence belongs to the class-III pyridoxal-phosphate-dependent aminotransferase family. ArgD subfamily. Homodimer. Requires pyridoxal 5'-phosphate as cofactor.

Its subcellular location is the cytoplasm. The enzyme catalyses N(2)-acetyl-L-ornithine + 2-oxoglutarate = N-acetyl-L-glutamate 5-semialdehyde + L-glutamate. It functions in the pathway amino-acid biosynthesis; L-arginine biosynthesis; N(2)-acetyl-L-ornithine from L-glutamate: step 4/4. In Caldanaerobacter subterraneus subsp. tengcongensis (strain DSM 15242 / JCM 11007 / NBRC 100824 / MB4) (Thermoanaerobacter tengcongensis), this protein is Acetylornithine aminotransferase.